The following is a 399-amino-acid chain: LIM/homeobox protein Lhx5 (399 aa).

2 LIM zinc-binding domains span residues valine 3–glycine 61 and threonine 62–isoleucine 125. 2 disordered regions span residues cysteine 136 to threonine 185 and proline 301 to tryptophan 399. Residues aspartate 151–asparagine 167 are compositionally biased toward basic and acidic residues. The homeobox DNA-binding region spans arginine 180–lysine 239.

The protein localises to the nucleus. Probably involved in the patterning of the nervous system, in particular in the early specification of the diencephalon. This Danio rerio (Zebrafish) protein is LIM/homeobox protein Lhx5 (lhx5).